A 165-amino-acid chain; its full sequence is Large ribosomal subunit protein uL10 (165 aa).

Belongs to the universal ribosomal protein uL10 family. Part of the ribosomal stalk of the 50S ribosomal subunit. The N-terminus interacts with L11 and the large rRNA to form the base of the stalk. The C-terminus forms an elongated spine to which L12 dimers bind in a sequential fashion forming a multimeric L10(L12)X complex.

Its function is as follows. Forms part of the ribosomal stalk, playing a central role in the interaction of the ribosome with GTP-bound translation factors. The polypeptide is Large ribosomal subunit protein uL10 (Buchnera aphidicola subsp. Acyrthosiphon pisum (strain 5A)).